Here is an 879-residue protein sequence, read N- to C-terminus: Phosphoenolpyruvate carboxylase (879 aa).

Catalysis depends on residues H138 and K545.

This sequence belongs to the PEPCase type 1 family. The cofactor is Mg(2+).

The enzyme catalyses oxaloacetate + phosphate = phosphoenolpyruvate + hydrogencarbonate. Forms oxaloacetate, a four-carbon dicarboxylic acid source for the tricarboxylic acid cycle. This Haemophilus influenzae (strain PittEE) protein is Phosphoenolpyruvate carboxylase.